Reading from the N-terminus, the 237-residue chain is E3 ubiquitin-protein ligase RNF166 (237 aa).

An RING-type zinc finger spans residues 33-73 (CPICLEVYHRPVAIGSCGHTFCGECLQPCLQVPSPLCPLCR). Positions 98, 101, 113, and 117 each coordinate Zn(2+). The segment at 98–117 (CRGCNKKVTLAKMRVHISSC) adopts a C2HC RNF-type zinc-finger fold. Residues 221 to 237 (DEEAAFQAALALSLSEN) form the UIM domain.

The protein localises to the cytoplasm. It carries out the reaction S-ubiquitinyl-[E2 ubiquitin-conjugating enzyme]-L-cysteine + [acceptor protein]-L-lysine = [E2 ubiquitin-conjugating enzyme]-L-cysteine + N(6)-ubiquitinyl-[acceptor protein]-L-lysine.. Its pathway is protein modification; protein ubiquitination. In terms of biological role, E3 ubiquitin-protein ligase that promotes the ubiquitination of different substrates. In turn, participates in different biological processes including interferon production or autophagy. Plays a role in the activation of RNA virus-induced interferon-beta production by promoting the ubiquitination of TRAF3 and TRAF6. Also plays a role in the early recruitment of autophagy adapters to bacteria. Mediates 'Lys-29' and 'Lys-33'-linked ubiquitination of SQSTM1 leading to xenophagic targeting of bacteria and inhibition of their replication. The protein is E3 ubiquitin-protein ligase RNF166 (RNF166) of Homo sapiens (Human).